Consider the following 401-residue polypeptide: ATP phosphoribosyltransferase regulatory subunit (401 aa).

This sequence belongs to the class-II aminoacyl-tRNA synthetase family. HisZ subfamily. As to quaternary structure, heteromultimer composed of HisG and HisZ subunits.

It localises to the cytoplasm. It participates in amino-acid biosynthesis; L-histidine biosynthesis; L-histidine from 5-phospho-alpha-D-ribose 1-diphosphate: step 1/9. In terms of biological role, required for the first step of histidine biosynthesis. May allow the feedback regulation of ATP phosphoribosyltransferase activity by histidine. The sequence is that of ATP phosphoribosyltransferase regulatory subunit from Desulforamulus reducens (strain ATCC BAA-1160 / DSM 100696 / MI-1) (Desulfotomaculum reducens).